The following is a 562-amino-acid chain: Serine palmitoyltransferase 2 (562 aa).

A helical transmembrane segment spans residues 61–81 (LITYLNYLILIILGHIHDFLG). Position 365 is an N6-(pyridoxal phosphate)lysine (Lys365).

The protein belongs to the class-II pyridoxal-phosphate-dependent aminotransferase family. Pyridoxal 5'-phosphate is required as a cofactor.

The protein resides in the membrane. It catalyses the reaction L-serine + hexadecanoyl-CoA + H(+) = 3-oxosphinganine + CO2 + CoA. Its pathway is lipid metabolism; sphingolipid metabolism. This is Serine palmitoyltransferase 2 (LCB2) from Kluyveromyces lactis (strain ATCC 8585 / CBS 2359 / DSM 70799 / NBRC 1267 / NRRL Y-1140 / WM37) (Yeast).